Reading from the N-terminus, the 269-residue chain is Phosphate import ATP-binding protein PstB 1 (269 aa).

Residues 25–264 (LSTEDLHVFY…PQVDLTNDYI (240 aa)) form the ABC transporter domain. 57-64 (GPSGSGKS) contacts ATP.

Belongs to the ABC transporter superfamily. Phosphate importer (TC 3.A.1.7) family. The complex is composed of two ATP-binding proteins (PstB), two transmembrane proteins (PstC and PstA) and a solute-binding protein (PstS).

It is found in the cell membrane. It catalyses the reaction phosphate(out) + ATP + H2O = ADP + 2 phosphate(in) + H(+). In terms of biological role, part of the ABC transporter complex PstSACB involved in phosphate import. Responsible for energy coupling to the transport system. The sequence is that of Phosphate import ATP-binding protein PstB 1 from Lactiplantibacillus plantarum (strain ATCC BAA-793 / NCIMB 8826 / WCFS1) (Lactobacillus plantarum).